We begin with the raw amino-acid sequence, 128 residues long: Large ribosomal subunit protein bL20 (128 aa).

Belongs to the bacterial ribosomal protein bL20 family.

Functionally, binds directly to 23S ribosomal RNA and is necessary for the in vitro assembly process of the 50S ribosomal subunit. It is not involved in the protein synthesizing functions of that subunit. The chain is Large ribosomal subunit protein bL20 from Anaplasma marginale (strain Florida).